A 317-amino-acid chain; its full sequence is Inactive serine protease 45 (317 aa).

The first 35 residues, 1–35 (MATSLRGLDAGPGSLRRWILICFAALLLLPPRPNL), serve as a signal peptide directing secretion. N-linked (GlcNAc...) asparagine glycosylation occurs at N40. The 248-residue stretch at 44-291 (PVCGTPWWPD…YTIWIKDQVS (248 aa)) folds into the Peptidase S1 domain. A disulfide bridge connects residues C75 and C91. N-linked (GlcNAc...) asparagine glycosylation occurs at N110. Cystine bridges form between C172-C249, C207-C230, and C239-C267. Residue N272 is glycosylated (N-linked (GlcNAc...) asparagine).

This sequence belongs to the peptidase S1 family.

The protein localises to the secreted. The polypeptide is Inactive serine protease 45 (Mus musculus (Mouse)).